The primary structure comprises 156 residues: Ribosome maturation factor RimP (156 aa).

The protein belongs to the RimP family.

It localises to the cytoplasm. In terms of biological role, required for maturation of 30S ribosomal subunits. The polypeptide is Ribosome maturation factor RimP (Lysinibacillus sphaericus (strain C3-41)).